The sequence spans 294 residues: 4-hydroxy-tetrahydrodipicolinate synthase (294 aa).

Pyruvate is bound at residue Thr-44. Tyr-132 (proton donor/acceptor) is an active-site residue. Catalysis depends on Lys-160, which acts as the Schiff-base intermediate with substrate. Pyruvate is bound at residue Val-202.

This sequence belongs to the DapA family. Homotetramer; dimer of dimers.

The protein localises to the cytoplasm. The catalysed reaction is L-aspartate 4-semialdehyde + pyruvate = (2S,4S)-4-hydroxy-2,3,4,5-tetrahydrodipicolinate + H2O + H(+). It participates in amino-acid biosynthesis; L-lysine biosynthesis via DAP pathway; (S)-tetrahydrodipicolinate from L-aspartate: step 3/4. Its function is as follows. Catalyzes the condensation of (S)-aspartate-beta-semialdehyde [(S)-ASA] and pyruvate to 4-hydroxy-tetrahydrodipicolinate (HTPA). The protein is 4-hydroxy-tetrahydrodipicolinate synthase of Leptospira borgpetersenii serovar Hardjo-bovis (strain L550).